The primary structure comprises 306 residues: Tyrosine recombinase XerC (306 aa).

A Core-binding (CB) domain is found at 10-94 (ARCHSYLQQF…AVKQWGEFLL (85 aa)). In terms of domain architecture, Tyr recombinase spans 115–294 (PLPKNIDVDS…DFQHLAKVYD (180 aa)). Residues Arg-154, Lys-178, His-246, Arg-249, and His-272 contribute to the active site. Tyr-281 acts as the O-(3'-phospho-DNA)-tyrosine intermediate in catalysis.

Belongs to the 'phage' integrase family. XerC subfamily. Forms a cyclic heterotetrameric complex composed of two molecules of XerC and two molecules of XerD.

Its subcellular location is the cytoplasm. Site-specific tyrosine recombinase, which acts by catalyzing the cutting and rejoining of the recombining DNA molecules. The XerC-XerD complex is essential to convert dimers of the bacterial chromosome into monomers to permit their segregation at cell division. It also contributes to the segregational stability of plasmids. In Shewanella oneidensis (strain ATCC 700550 / JCM 31522 / CIP 106686 / LMG 19005 / NCIMB 14063 / MR-1), this protein is Tyrosine recombinase XerC.